The chain runs to 105 residues: Guanidinium exporter (105 aa).

A helical membrane pass occupies residues 1–21 (MSWIILVIAGLLEVVWAVGLK). At 22 to 28 (YTHGFSR) the chain is on the cytoplasmic side. The chain crosses the membrane as a helical span at residues 29–49 (LTPSVITVTAMIVSLALLAWA). Topologically, residues 50–57 (MKSLPVGT) are periplasmic. A helical membrane pass occupies residues 58 to 78 (AYAVWTGIGAVGAAITGIVLL). Topologically, residues 79–81 (GES) are cytoplasmic. Residues 82 to 102 (ANPMRLASLALIVLGIIGLKL) form a helical membrane-spanning segment. Over 103–105 (STH) the chain is Periplasmic.

It belongs to the drug/metabolite transporter (DMT) superfamily. Small multidrug resistance (SMR) (TC 2.A.7.1) family. Gdx/SugE subfamily.

The protein resides in the cell inner membrane. In terms of biological role, guanidinium ion exporter. Couples guanidinium export to the proton motive force, exchanging one guanidinium ion for two protons. In Escherichia coli O6:H1 (strain CFT073 / ATCC 700928 / UPEC), this protein is Guanidinium exporter.